The sequence spans 257 residues: UPF0246 protein A1S_2267 (257 aa).

This sequence belongs to the UPF0246 family.

The polypeptide is UPF0246 protein A1S_2267 (Acinetobacter baumannii (strain ATCC 17978 / DSM 105126 / CIP 53.77 / LMG 1025 / NCDC KC755 / 5377)).